The primary structure comprises 427 residues: MKLRTNAKGLRGSLRVPGDKSISHRSIIFGSLAKGVTKVHDILRGEDVLSTMQVFREMGVQIEDKGDLVEIHGCGFDGLQEPQRPLDMGNSGTSMRLIAGVLAGQNFSAQMVGDDSLSKRPMDRISLPLRRMGVEIAGQTERDLPPLTIHGNPNLKPIQYQLPIASAQVKSALIFAALQAQGESLIIEKDLTRNHTEDMLLQFGGQLKVDGKEIRVAGKQELQAQEVVVPGDISSAAFWLVAGLIVPSSKITLTNVGINETRTGILDVIQAMGGKLSVSEVDEVVKSATITVESSDLYGTEISGELIPRLIDELPIIALLATQAEGQTLIQDAEELKVKETDRIQVVADALNSMGADIQPTADGMIIQGKTSLKGASVHTYGDHRIGMMTAIAALLVKDGSVELSRAEAINTSYPDFFAHLEDLANV.

3-phosphoshikimate is bound by residues Lys20, Ser21, and Arg25. Lys20 lines the phosphoenolpyruvate pocket. Gly92 and Arg120 together coordinate phosphoenolpyruvate. Residues Ser166, Gln168, Asp312, and Lys339 each contribute to the 3-phosphoshikimate site. Residue Gln168 coordinates phosphoenolpyruvate. Asp312 serves as the catalytic Proton acceptor. 2 residues coordinate phosphoenolpyruvate: Arg343 and Arg385.

Belongs to the EPSP synthase family. As to quaternary structure, monomer.

Its subcellular location is the cytoplasm. The enzyme catalyses 3-phosphoshikimate + phosphoenolpyruvate = 5-O-(1-carboxyvinyl)-3-phosphoshikimate + phosphate. It functions in the pathway metabolic intermediate biosynthesis; chorismate biosynthesis; chorismate from D-erythrose 4-phosphate and phosphoenolpyruvate: step 6/7. In terms of biological role, catalyzes the transfer of the enolpyruvyl moiety of phosphoenolpyruvate (PEP) to the 5-hydroxyl of shikimate-3-phosphate (S3P) to produce enolpyruvyl shikimate-3-phosphate and inorganic phosphate. This chain is 3-phosphoshikimate 1-carboxyvinyltransferase, found in Streptococcus gordonii (strain Challis / ATCC 35105 / BCRC 15272 / CH1 / DL1 / V288).